Reading from the N-terminus, the 339-residue chain is Phenylalanine--tRNA ligase alpha subunit (339 aa).

E247 lines the Mg(2+) pocket.

The protein belongs to the class-II aminoacyl-tRNA synthetase family. Phe-tRNA synthetase alpha subunit type 1 subfamily. As to quaternary structure, tetramer of two alpha and two beta subunits. It depends on Mg(2+) as a cofactor.

It localises to the cytoplasm. The enzyme catalyses tRNA(Phe) + L-phenylalanine + ATP = L-phenylalanyl-tRNA(Phe) + AMP + diphosphate + H(+). The protein is Phenylalanine--tRNA ligase alpha subunit of Deinococcus geothermalis (strain DSM 11300 / CIP 105573 / AG-3a).